Consider the following 69-residue polypeptide: Large ribosomal subunit protein uL29 (69 aa).

The protein belongs to the universal ribosomal protein uL29 family.

The chain is Large ribosomal subunit protein uL29 (rpmC) from Lactococcus lactis subsp. lactis (strain IL1403) (Streptococcus lactis).